A 487-amino-acid chain; its full sequence is 6-phosphogluconate dehydrogenase, decarboxylating 3, chloroplastic (487 aa).

Residue Met1 is modified to N-acetylmethionine. NADP(+) is bound by residues 13–18, 36–38, 80–82, and Asn108; these read GLAVMG, NRT, and VKA. Substrate-binding positions include Asn108 and 134–136; that span reads SGG. Lys188 (proton acceptor) is an active-site residue. A substrate-binding site is contributed by 191–192; that stretch reads HN. Glu195 serves as the catalytic Proton donor. Residues Tyr196, Lys266, Arg293, Arg458, and His464 each contribute to the substrate site.

The protein belongs to the 6-phosphogluconate dehydrogenase family. In terms of assembly, forms homodimer. Forms heterodimers with PGD1 or PGD2.

The protein resides in the plastid. It localises to the chloroplast. It is found in the cytoplasm. The protein localises to the cytosol. It catalyses the reaction 6-phospho-D-gluconate + NADP(+) = D-ribulose 5-phosphate + CO2 + NADPH. It functions in the pathway carbohydrate degradation; pentose phosphate pathway; D-ribulose 5-phosphate from D-glucose 6-phosphate (oxidative stage): step 3/3. In terms of biological role, catalyzes the oxidative decarboxylation of 6-phosphogluconate to ribulose 5-phosphate and CO(2), with concomitant reduction of NADP to NADPH. This chain is 6-phosphogluconate dehydrogenase, decarboxylating 3, chloroplastic, found in Arabidopsis thaliana (Mouse-ear cress).